The chain runs to 320 residues: Pyrroline-5-carboxylate reductase 2 (320 aa).

Serine 2 carries the N-acetylserine modification. Residues 6–11 and serine 34 each bind NADP(+); that span reads IGAGQL. 9 residues coordinate NADPH: alanine 8, glutamine 10, leucine 11, serine 34, glutamate 36, asparagine 56, valine 70, lysine 71, and alanine 97. NADP(+) is bound by residues asparagine 56, 69-72, and 95-97; these read AVKP and CAA. Glutamate 164 provides a ligand contact to L-proline. NADPH is bound at residue asparagine 230. L-proline is bound by residues alanine 237 and threonine 238. Positions 295–305 are enriched in low complexity; the sequence is PTVSTLTPSSP. A disordered region spans residues 295 to 320; that stretch reads PTVSTLTPSSPGKLLTRSLALGGKKD. Serine 304 carries the phosphoserine modification.

It belongs to the pyrroline-5-carboxylate reductase family. Homodecamer; composed of 5 homodimers. Interacts with LTO1.

Its subcellular location is the cytoplasm. The protein localises to the mitochondrion. It catalyses the reaction L-proline + NADP(+) = (S)-1-pyrroline-5-carboxylate + NADPH + 2 H(+). It carries out the reaction L-proline + NAD(+) = (S)-1-pyrroline-5-carboxylate + NADH + 2 H(+). It functions in the pathway amino-acid biosynthesis; L-proline biosynthesis; L-proline from L-glutamate 5-semialdehyde: step 1/1. In terms of biological role, oxidoreductase that catalyzes the last step in proline biosynthesis, which corresponds to the reduction of pyrroline-5-carboxylate to L-proline using NAD(P)H. At physiologic concentrations, has higher specific activity in the presence of NADH. Involved in cellular response to oxidative stress. In some cell types, such as erythrocytes, its primary function may be the generation of NADP(+). This chain is Pyrroline-5-carboxylate reductase 2 (PYCR2), found in Macaca fascicularis (Crab-eating macaque).